A 331-amino-acid chain; its full sequence is Ribosomal RNA small subunit methyltransferase H (331 aa).

S-adenosyl-L-methionine is bound by residues 56-58, Asp76, Phe100, Asp122, and Gln129; that span reads GGH.

It belongs to the methyltransferase superfamily. RsmH family.

The protein localises to the cytoplasm. The catalysed reaction is cytidine(1402) in 16S rRNA + S-adenosyl-L-methionine = N(4)-methylcytidine(1402) in 16S rRNA + S-adenosyl-L-homocysteine + H(+). Functionally, specifically methylates the N4 position of cytidine in position 1402 (C1402) of 16S rRNA. This Chromohalobacter salexigens (strain ATCC BAA-138 / DSM 3043 / CIP 106854 / NCIMB 13768 / 1H11) protein is Ribosomal RNA small subunit methyltransferase H.